The primary structure comprises 150 residues: UPF0756 membrane protein YE1142 (150 aa).

The next 4 helical transmembrane spans lie at Met-1–Ser-21, Tyr-51–Gly-71, Ile-88–Met-108, and Val-114–Val-134.

The protein belongs to the UPF0756 family.

It is found in the cell membrane. This chain is UPF0756 membrane protein YE1142, found in Yersinia enterocolitica serotype O:8 / biotype 1B (strain NCTC 13174 / 8081).